Here is a 176-residue protein sequence, read N- to C-terminus: Macro domain-containing protein LMOf2365_2748 (176 aa).

The region spanning 1–175 is the Macro domain; the sequence is MEITVVKGDI…LYNKLINSEV (175 aa).

The protein belongs to the MacroD-type family.

In Listeria monocytogenes serotype 4b (strain F2365), this protein is Macro domain-containing protein LMOf2365_2748.